Reading from the N-terminus, the 114-residue chain is UPF0757 protein YmgG (114 aa).

The protein belongs to the UPF0757 family.

This Escherichia fergusonii (strain ATCC 35469 / DSM 13698 / CCUG 18766 / IAM 14443 / JCM 21226 / LMG 7866 / NBRC 102419 / NCTC 12128 / CDC 0568-73) protein is UPF0757 protein YmgG.